The chain runs to 156 residues: MAQSVKTMVEGGKATTGPPIGPALGPLGLNVAQVVKEINEKTKEFQGMRVPVTITVVDPETKKYEITVGIPPTSALLKKKLGIEKGAAKRKEAIAGNATLDQIVDVAKTKMASMLASDLKAATLEVLGTCVSMGINVDGKDPKEVQRQIKAGEISI.

The disordered stretch occupies residues Met-1 to Ile-20.

This sequence belongs to the universal ribosomal protein uL11 family. In terms of assembly, part of the ribosomal stalk of the 50S ribosomal subunit. Interacts with L10 and the large rRNA to form the base of the stalk. L10 forms an elongated spine to which L12 dimers bind in a sequential fashion forming a multimeric L10(L12)X complex.

Its function is as follows. Forms part of the ribosomal stalk which helps the ribosome interact with GTP-bound translation factors. This is Large ribosomal subunit protein uL11 from Thermoplasma acidophilum (strain ATCC 25905 / DSM 1728 / JCM 9062 / NBRC 15155 / AMRC-C165).